A 159-amino-acid polypeptide reads, in one-letter code: Protein-export protein SecB (159 aa).

It belongs to the SecB family. In terms of assembly, homotetramer, a dimer of dimers. One homotetramer interacts with 1 SecA dimer.

It is found in the cytoplasm. Functionally, one of the proteins required for the normal export of preproteins out of the cell cytoplasm. It is a molecular chaperone that binds to a subset of precursor proteins, maintaining them in a translocation-competent state. It also specifically binds to its receptor SecA. This is Protein-export protein SecB from Bartonella bacilliformis (strain ATCC 35685 / KC583 / Herrer 020/F12,63).